Consider the following 125-residue polypeptide: Succinate dehydrogenase assembly factor 3, mitochondrial (125 aa).

A mitochondrion-targeting transit peptide spans 1 to 30 (MTGRHVSRVRSLYRRILQLHRALPPDLKAL).

The protein belongs to the complex I LYR family. SDHAF3 subfamily. Interacts with Sdhb within an Sdha-Sdhb subcomplex.

It localises to the mitochondrion matrix. In terms of biological role, plays an essential role in the assembly of succinate dehydrogenase (SDH), an enzyme complex (also referred to as respiratory complex II) that is a component of both the tricarboxylic acid (TCA) cycle and the mitochondrial electron transport chain, and which couples the oxidation of succinate to fumarate with the reduction of ubiquinone (coenzyme Q) to ubiquinol. Promotes maturation of the iron-sulfur protein subunit Sdhb of the SDH catalytic dimer, protecting it from the deleterious effects of oxidants. May act together with SDHAF1. The sequence is that of Succinate dehydrogenase assembly factor 3, mitochondrial from Rattus norvegicus (Rat).